We begin with the raw amino-acid sequence, 247 residues long: MVPLDKDNQDICPICLDPLKEAVSTDCRHLFCRMCLIRHMDKASVSGVLSCPVCRKPCSETVLGDNYICHTHQKRVCRFCESSRHLLCEECLQSPEHRAHTELSIENAISHYKERLNRRSRKLRKDLGDLQRLKAQEEKMLQALQVDWGSHRPRTEQQNQDQTELQQKALPRHWLDQREDPPEEVAKVFNFSEAVTQLSILVSSLERMAKELDASTLKDASDLLDRSSQQKLEGLLSHVPPANSKLS.

Residues 12-55 form an RING-type zinc finger; the sequence is CPICLDPLKEAVSTDCRHLFCRMCLIRHMDKASVSGVLSCPVCR. A B box-type zinc finger spans residues 64–105; sequence GDNYICHTHQKRVCRFCESSRHLLCEECLQSPEHRAHTELSI. Zn(2+) is bound by residues Cys-69, His-72, Cys-91, and His-97. Positions 111–148 form a coiled coil; sequence HYKERLNRRSRKLRKDLGDLQRLKAQEEKMLQALQVDW.

The protein belongs to the TRIM/RBCC family. In terms of assembly, interacts with NEDD8.

The enzyme catalyses S-ubiquitinyl-[E2 ubiquitin-conjugating enzyme]-L-cysteine + [acceptor protein]-L-lysine = [E2 ubiquitin-conjugating enzyme]-L-cysteine + N(6)-ubiquitinyl-[acceptor protein]-L-lysine.. Functionally, E3 ubiquitin-protein ligase that plays a role in the limitation of the innate immune response. Mediates inhibition of the RLR signaling pathway by ubiquitinating RIGI and IFIH1 receptors, leading to their proteasomal degradation. Also promotes the neddylation of IKBKG/NEMO, stabilizing NFKBIA, and thereby inhibiting of NF-kappa-B nuclear translocation and activation. This is E3 ubiquitin ligase TRIM40 (Trim40) from Rattus norvegicus (Rat).